We begin with the raw amino-acid sequence, 500 residues long: NADH-quinone oxidoreductase subunit N (500 aa).

14 helical membrane passes run 6-26, 40-60, 69-89, 106-125, 129-151, 164-184, 207-227, 239-259, 276-296, 302-322, 337-357, 380-400, 417-437, and 464-484; these read SWIA…IALV, ALTL…ALGG, MVVV…ALMI, GGEF…VMIS, FLVL…ALRR, FVLG…LYGA, LVFG…AVPF, PTAV…AMTI, MLAL…VAQT, LAFS…AGVV, MFYA…ILLL, YAGV…LVGF, SYLV…FYYL, and IVLA…SSLM.

Belongs to the complex I subunit 2 family. NDH-1 is composed of 14 different subunits. Subunits NuoA, H, J, K, L, M, N constitute the membrane sector of the complex.

The protein localises to the cell inner membrane. It carries out the reaction a quinone + NADH + 5 H(+)(in) = a quinol + NAD(+) + 4 H(+)(out). NDH-1 shuttles electrons from NADH, via FMN and iron-sulfur (Fe-S) centers, to quinones in the respiratory chain. The immediate electron acceptor for the enzyme in this species is believed to be ubiquinone. Couples the redox reaction to proton translocation (for every two electrons transferred, four hydrogen ions are translocated across the cytoplasmic membrane), and thus conserves the redox energy in a proton gradient. The protein is NADH-quinone oxidoreductase subunit N of Polaromonas naphthalenivorans (strain CJ2).